Consider the following 252-residue polypeptide: tRNA pseudouridine synthase A (252 aa).

The active-site Nucleophile is the Asp52. Position 112 (Tyr112) interacts with substrate.

The protein belongs to the tRNA pseudouridine synthase TruA family. Homodimer.

The enzyme catalyses uridine(38/39/40) in tRNA = pseudouridine(38/39/40) in tRNA. Formation of pseudouridine at positions 38, 39 and 40 in the anticodon stem and loop of transfer RNAs. The polypeptide is tRNA pseudouridine synthase A (Porphyromonas gingivalis (strain ATCC 33277 / DSM 20709 / CIP 103683 / JCM 12257 / NCTC 11834 / 2561)).